The following is a 192-amino-acid chain: Spermatogenesis-associated protein 3 (192 aa).

Residues 1 to 15 (MKKVKKKRSEARRHR) are compositionally biased toward basic residues. Disordered regions lie at residues 1 to 65 (MKKV…TTSR) and 161 to 184 (SRKP…GSGG). The segment covering 19–59 (SQHASSNSTSQQPSPESTPQQPSPESTPQQPSPESTPQHSS) has biased composition (low complexity).

It localises to the cell projection. Its subcellular location is the cilium. The protein localises to the flagellum. This is Spermatogenesis-associated protein 3 (SPATA3) from Homo sapiens (Human).